A 264-amino-acid chain; its full sequence is Thymidylate synthase (264 aa).

Arginine 21 contacts dUMP. Histidine 51 contributes to the (6R)-5,10-methylene-5,6,7,8-tetrahydrofolate binding site. 126–127 (RR) contacts dUMP. Catalysis depends on cysteine 146, which acts as the Nucleophile. Residues 166–169 (RSAD), asparagine 177, and 207–209 (HLY) each bind dUMP. Aspartate 169 serves as a coordination point for (6R)-5,10-methylene-5,6,7,8-tetrahydrofolate. Alanine 263 contributes to the (6R)-5,10-methylene-5,6,7,8-tetrahydrofolate binding site.

It belongs to the thymidylate synthase family. Bacterial-type ThyA subfamily. As to quaternary structure, homodimer.

It localises to the cytoplasm. The enzyme catalyses dUMP + (6R)-5,10-methylene-5,6,7,8-tetrahydrofolate = 7,8-dihydrofolate + dTMP. Its pathway is pyrimidine metabolism; dTTP biosynthesis. Functionally, catalyzes the reductive methylation of 2'-deoxyuridine-5'-monophosphate (dUMP) to 2'-deoxythymidine-5'-monophosphate (dTMP) while utilizing 5,10-methylenetetrahydrofolate (mTHF) as the methyl donor and reductant in the reaction, yielding dihydrofolate (DHF) as a by-product. This enzymatic reaction provides an intracellular de novo source of dTMP, an essential precursor for DNA biosynthesis. The chain is Thymidylate synthase from Polynucleobacter asymbioticus (strain DSM 18221 / CIP 109841 / QLW-P1DMWA-1) (Polynucleobacter necessarius subsp. asymbioticus).